The primary structure comprises 33 residues: Photosystem II reaction center protein T (33 aa).

A helical membrane pass occupies residues 3–23 (ALVYTFLLVSTLGIIFFAIFF).

This sequence belongs to the PsbT family. In terms of assembly, PSII is composed of 1 copy each of membrane proteins PsbA, PsbB, PsbC, PsbD, PsbE, PsbF, PsbH, PsbI, PsbJ, PsbK, PsbL, PsbM, PsbT, PsbY, PsbZ, Psb30/Ycf12, at least 3 peripheral proteins of the oxygen-evolving complex and a large number of cofactors. It forms dimeric complexes.

The protein localises to the plastid. It is found in the chloroplast thylakoid membrane. Functionally, found at the monomer-monomer interface of the photosystem II (PS II) dimer, plays a role in assembly and dimerization of PSII. PSII is a light-driven water plastoquinone oxidoreductase, using light energy to abstract electrons from H(2)O, generating a proton gradient subsequently used for ATP formation. In Arabidopsis thaliana (Mouse-ear cress), this protein is Photosystem II reaction center protein T.